A 173-amino-acid chain; its full sequence is Histone deacetylase complex subunit SAP30 homolog (173 aa).

The Atypical zinc-finger motif lies at 21 to 69; the sequence is CCLLDDGDRCRNQAGNASYSKRIQKTVTQRRLKLSIDTAARHIYICDFH.

Belongs to the SAP30 family. In terms of assembly, component of the class 1 Sin3-histone deacetylase complex (HDAC).

The protein resides in the nucleus. Its function is as follows. Required for the function of the class 1 Sin3-histone deacetylase complex (HDAC). This Aedes aegypti (Yellowfever mosquito) protein is Histone deacetylase complex subunit SAP30 homolog.